Here is a 785-residue protein sequence, read N- to C-terminus: Formin-like protein 3 (785 aa).

A signal peptide spans 1-20; it reads MGRLRLAFLAISLVVFVCVS. A disordered region spans residues 96 to 145; sequence YDWLAPASSPNEPPAETPDESSPSPSEETPSVVAPSQSVPGPPRPPPQRE. Residues 115 to 134 show a composition bias toward low complexity; it reads ESSPSPSEETPSVVAPSQSV. The chain crosses the membrane as a helical span at residues 154 to 174; that stretch reads LIIAVASTAVLTFVFVALMFL. 3 disordered regions span residues 184-228, 241-329, and 730-785; these read AVGS…KKRS, EFST…APKT, and ETTK…SSPS. Over residues 201-223 the composition is skewed to polar residues; that stretch reads STGSTENSPTVASTSRKMFSVAS. The span at 256 to 303 shows a compositional bias: pro residues; it reads LKLPPGRSAPPPPPAAAPPPQPPPPPPPKPQPPPPPKIARPPPAPPKG. The 427-residue stretch at 321-747 folds into the FH2 domain; the sequence is DSETGAPKTK…SGKKESEMTT (427 aa). Polar residues predominate over residues 745–754; that stretch reads MTTSDSNQPS. The segment covering 773-785 has biased composition (acidic residues); the sequence is SDDSDDEEDSSPS.

The protein belongs to the formin-like family. Class-I subfamily.

The protein localises to the membrane. Its function is as follows. Acts as actin nucleation factor that directs the formation of actin cables and polarized growth in pollen tubes. The protein is Formin-like protein 3 (FH3) of Arabidopsis thaliana (Mouse-ear cress).